We begin with the raw amino-acid sequence, 393 residues long: S-adenosylmethionine synthase (393 aa).

His-16 provides a ligand contact to ATP. Residue Asp-18 participates in Mg(2+) binding. Residue Glu-44 participates in K(+) binding. Glu-57 and Gln-100 together coordinate L-methionine. Residues 100 to 110 form a flexible loop region; sequence QSNDIAQGVDH. Residues 167–169, 238–239, Asp-247, 253–254, Ala-270, and Lys-274 each bind ATP; these read DAK, RF, and RK. Asp-247 contributes to the L-methionine binding site. Residue Lys-278 coordinates L-methionine.

This sequence belongs to the AdoMet synthase family. As to quaternary structure, homotetramer; dimer of dimers. Mg(2+) is required as a cofactor. K(+) serves as cofactor.

The protein resides in the cytoplasm. The enzyme catalyses L-methionine + ATP + H2O = S-adenosyl-L-methionine + phosphate + diphosphate. Its pathway is amino-acid biosynthesis; S-adenosyl-L-methionine biosynthesis; S-adenosyl-L-methionine from L-methionine: step 1/1. Functionally, catalyzes the formation of S-adenosylmethionine (AdoMet) from methionine and ATP. The overall synthetic reaction is composed of two sequential steps, AdoMet formation and the subsequent tripolyphosphate hydrolysis which occurs prior to release of AdoMet from the enzyme. This is S-adenosylmethionine synthase from Albidiferax ferrireducens (strain ATCC BAA-621 / DSM 15236 / T118) (Rhodoferax ferrireducens).